Reading from the N-terminus, the 407-residue chain is Probable protein S-acyltransferase 9 (407 aa).

2 consecutive transmembrane segments (helical) span residues 28 to 48 (WSIP…SVFV) and 62 to 82 (GHVF…LLFL). In terms of domain architecture, DHHC spans 136 to 179 (KYCDTCMLYRPPRCSHCSICNNCVERFDHHCPWRNYRYFFMFVS). Cys-166 functions as the S-palmitoyl cysteine intermediate in the catalytic mechanism. The next 2 helical transmembrane spans lie at 174–194 (FFMF…MSAL) and 217–237 (AVML…LTGF). Residues 300-407 (LATTWERPEE…RSYAAAEEGR (108 aa)) form a disordered region. A compositionally biased stretch (basic and acidic residues) spans 346-356 (DTAHHKIDIDQ).

This sequence belongs to the DHHC palmitoyltransferase family. Mainly expressed in seeds.

It localises to the cell membrane. The enzyme catalyses L-cysteinyl-[protein] + hexadecanoyl-CoA = S-hexadecanoyl-L-cysteinyl-[protein] + CoA. Its function is as follows. Palmitoyl acyltransferase. The chain is Probable protein S-acyltransferase 9 (PAT09) from Arabidopsis thaliana (Mouse-ear cress).